The chain runs to 159 residues: Nucleotide-binding protein PSPA7_4966 (159 aa).

Belongs to the YajQ family.

Nucleotide-binding protein. This Pseudomonas paraeruginosa (strain DSM 24068 / PA7) (Pseudomonas aeruginosa (strain PA7)) protein is Nucleotide-binding protein PSPA7_4966.